The following is a 100-amino-acid chain: MHLTSREQEKLMLFLAGELAAKRKARGVKLNYPETVAYIASHLQEAARDGVSVAEVMQYGSTLLTVDDVMEGVAEMVHEVQIEATFPDGTKLVTVHNPIR.

The protein belongs to the urease gamma subunit family. Heterotrimer of UreA (gamma), UreB (beta) and UreC (alpha) subunits. Three heterotrimers associate to form the active enzyme.

It is found in the cytoplasm. The enzyme catalyses urea + 2 H2O + H(+) = hydrogencarbonate + 2 NH4(+). It functions in the pathway nitrogen metabolism; urea degradation; CO(2) and NH(3) from urea (urease route): step 1/1. The polypeptide is Urease subunit gamma (Haemophilus influenzae (strain PittGG)).